An 807-amino-acid chain; its full sequence is Probable dimethyl sulfoxide reductase chain YnfF (807 aa).

A signal peptide (tat-type signal) is located at residues 1–45 (MKIHTTEALMKAEISRRSLMKTSALGSLALASSAFTLPFSQMVRA). The 4Fe-4S Mo/W bis-MGD-type domain maps to 52-113 (EKAVWSSCTV…SIRRRMNHPD (62 aa)). Residues Cys59, Cys63, Cys67, and Cys99 each coordinate [4Fe-4S] cluster. A Mo-bis(molybdopterin guanine dinucleotide)-binding site is contributed by Ser195.

Belongs to the prokaryotic molybdopterin-containing oxidoreductase family. The complex consists of three subunits: YnfF, the reductase; YnfG, an electron transfer protein, and YnfH, a membrane anchor protein. Requires [4Fe-4S] cluster as cofactor. Mo-bis(molybdopterin guanine dinucleotide) serves as cofactor. Post-translationally, exported by the Tat system. The position of the signal peptide cleavage has not been experimentally proven. Can also be exported by the Sec system.

The protein resides in the cell membrane. Functionally, terminal reductase during anaerobic growth on various sulfoxide and N-oxide compounds. This Escherichia coli (strain K12) protein is Probable dimethyl sulfoxide reductase chain YnfF (ynfF).